A 421-amino-acid polypeptide reads, in one-letter code: Diaminobutyrate--2-oxoglutarate transaminase (421 aa).

Position 267 is an N6-(pyridoxal phosphate)lysine (Lys267).

Belongs to the class-III pyridoxal-phosphate-dependent aminotransferase family. Homohexamer. It depends on pyridoxal 5'-phosphate as a cofactor.

The enzyme catalyses L-2,4-diaminobutanoate + 2-oxoglutarate = L-aspartate 4-semialdehyde + L-glutamate. It functions in the pathway amine and polyamine biosynthesis; ectoine biosynthesis; L-ectoine from L-aspartate 4-semialdehyde: step 1/3. Its function is as follows. Catalyzes reversively the conversion of L-aspartate beta-semialdehyde (ASA) to L-2,4-diaminobutyrate (DABA) by transamination with L-glutamate. Seems to use L-glutamate specifically as the amino group donor to ASA, as it is not active with L-alanine, L-glutamine, L-aspartate and L-lysine, and is only poorly active with L-homoserine. In the reverse reaction, gamma-aminobutyric acid (GABA) and L-ornithine can also be used as amino group donors to 2-oxoglutarate, but with a reduced activity compared to that with DABA. The protein is Diaminobutyrate--2-oxoglutarate transaminase (ectB) of Halomonas elongata (strain ATCC 33173 / DSM 2581 / NBRC 15536 / NCIMB 2198 / 1H9).